Reading from the N-terminus, the 450-residue chain is UDP-N-acetylmuramate--L-alanine ligase (450 aa).

112-118 is an ATP binding site; the sequence is GTHGKTT.

It belongs to the MurCDEF family.

The protein resides in the cytoplasm. It catalyses the reaction UDP-N-acetyl-alpha-D-muramate + L-alanine + ATP = UDP-N-acetyl-alpha-D-muramoyl-L-alanine + ADP + phosphate + H(+). Its pathway is cell wall biogenesis; peptidoglycan biosynthesis. In terms of biological role, cell wall formation. This chain is UDP-N-acetylmuramate--L-alanine ligase, found in Endomicrobium trichonymphae.